A 385-amino-acid polypeptide reads, in one-letter code: Probable thioesterase PNKD (385 aa).

Over residues 32-42 (KASQNRTRALQ) the composition is skewed to polar residues. The interval 32-56 (KASQNRTRALQSHSSPECKEEPEPL) is disordered. Valine 121 is subject to Phosphoserine. Histidine 172, histidine 174, aspartate 176, histidine 177, histidine 229, aspartate 253, and histidine 291 together coordinate Zn(2+).

The protein belongs to the metallo-beta-lactamase superfamily. Glyoxalase II family. As to quaternary structure, isoform 2 interacts with the sarcomeric proteins, MRLC2, MYOM1 and ENO3. Requires Zn(2+) as cofactor. Undergoes cleavage at the N-terminus. As to expression, expressed in many discrete areas of the brain.

The protein localises to the cell membrane. Its subcellular location is the mitochondrion. It is found in the cytoplasm. It catalyses the reaction a thioester + H2O = a thiol + a carboxylate + H(+). In terms of biological role, probable thioesterase that may play a role in cellular detoxification processes; it likely acts on a yet-unknown alpha-hydroxythioester substrate. In vitro, it is able to catalyze the hydrolysis of S-D-lactoyl-glutathione to form glutathione and D-lactic acid at very low rate, though this reaction is not physiologically relevant in vivo. The sequence is that of Probable thioesterase PNKD (Pnkd) from Mus musculus (Mouse).